Reading from the N-terminus, the 598-residue chain is Elongation factor 4 (598 aa).

The tr-type G domain occupies 4–181 (KKIRNFAIIA…AIVNLIPPPQ (178 aa)). Residues 16 to 21 (DHGKST) and 128 to 131 (NKID) each bind GTP.

This sequence belongs to the TRAFAC class translation factor GTPase superfamily. Classic translation factor GTPase family. LepA subfamily.

Its subcellular location is the cell membrane. It carries out the reaction GTP + H2O = GDP + phosphate + H(+). Functionally, required for accurate and efficient protein synthesis under certain stress conditions. May act as a fidelity factor of the translation reaction, by catalyzing a one-codon backward translocation of tRNAs on improperly translocated ribosomes. Back-translocation proceeds from a post-translocation (POST) complex to a pre-translocation (PRE) complex, thus giving elongation factor G a second chance to translocate the tRNAs correctly. Binds to ribosomes in a GTP-dependent manner. This Mesomycoplasma hyopneumoniae (strain 7448) (Mycoplasma hyopneumoniae) protein is Elongation factor 4.